Reading from the N-terminus, the 547-residue chain is Phosphomethylpyrimidine synthase (547 aa).

Positions 1–15 are enriched in polar residues; that stretch reads MTETLSKTTEPSVTT. The interval 1–36 is disordered; it reads MTETLSKTTEPSVTTGPIPGSSKAYREVANPDGGPS. Residues N150, M179, Y208, H244, 264–266, 305–308, and E344 contribute to the substrate site; these read SRG and DGLR. H348 contributes to the Zn(2+) binding site. Substrate is bound at residue Y371. H412 lines the Zn(2+) pocket. Residues C492, C495, and C500 each contribute to the [4Fe-4S] cluster site.

Belongs to the ThiC family. [4Fe-4S] cluster is required as a cofactor.

The catalysed reaction is 5-amino-1-(5-phospho-beta-D-ribosyl)imidazole + S-adenosyl-L-methionine = 4-amino-2-methyl-5-(phosphooxymethyl)pyrimidine + CO + 5'-deoxyadenosine + formate + L-methionine + 3 H(+). The protein operates within cofactor biosynthesis; thiamine diphosphate biosynthesis. In terms of biological role, catalyzes the synthesis of the hydroxymethylpyrimidine phosphate (HMP-P) moiety of thiamine from aminoimidazole ribotide (AIR) in a radical S-adenosyl-L-methionine (SAM)-dependent reaction. In Mycobacterium leprae (strain Br4923), this protein is Phosphomethylpyrimidine synthase.